We begin with the raw amino-acid sequence, 466 residues long: MGKTLYQKLFEAHVVHEAPNETPLLYIDRHLVHEVTSPQAFDGLRAMGRKVRQPGKTFATMDHNVSTQTKDINASGEMARIQMQELIKNCAEFGVQLYDLNHPYQGIVHVIGPEQGMTLPGMTIVCGDSHTATHGAFGSLAFGIGTSEVEHVLATQTLKQGRAKTMKIEVTGDAPHGITAKDIVLAIIGKTGSAGGTGHVVEFCGKAIRALSMEGRMTLCNMAIEMGAKAGLVAPDETTFNYLKGRQFAPKDANWDAAVAYWNTLKSDDDAQFDTVVTLDAAQIAPQVTWGTNPGQVIAVNQEIPNPDSFSDPVERASAAKALAYMDLQPGIKLTDVKIDKVFIGSCTNSRIEDLRAAAEIAKGRKVAAGVQAIVVPGSGPVKTMAELEGLDKVFIEAGFEWRLPGCSMCLAMNNDRLNPGERCASTSNRNFEGRQGRAGRTHLVSPAMAAAAAVTGRFADVRELN.

[4Fe-4S] cluster-binding residues include cysteine 347, cysteine 407, and cysteine 410.

Belongs to the aconitase/IPM isomerase family. LeuC type 1 subfamily. Heterodimer of LeuC and LeuD. [4Fe-4S] cluster is required as a cofactor.

It catalyses the reaction (2R,3S)-3-isopropylmalate = (2S)-2-isopropylmalate. The protein operates within amino-acid biosynthesis; L-leucine biosynthesis; L-leucine from 3-methyl-2-oxobutanoate: step 2/4. Catalyzes the isomerization between 2-isopropylmalate and 3-isopropylmalate, via the formation of 2-isopropylmaleate. The sequence is that of 3-isopropylmalate dehydratase large subunit from Pectobacterium carotovorum subsp. carotovorum (strain PC1).